A 230-amino-acid polypeptide reads, in one-letter code: Ribonuclease 3 (230 aa).

Residues 5–134 (EALLKSSFAI…FLGALLLDKG (130 aa)) enclose the RNase III domain. Residue Glu-47 coordinates Mg(2+). Asp-51 is an active-site residue. Mg(2+) is bound by residues Asp-120 and Glu-123. Glu-123 is a catalytic residue. A DRBM domain is found at 160–229 (DYKTSLQEIL…AENALKALSE (70 aa)).

This sequence belongs to the ribonuclease III family. In terms of assembly, homodimer. Mg(2+) is required as a cofactor.

It localises to the cytoplasm. It carries out the reaction Endonucleolytic cleavage to 5'-phosphomonoester.. Digests double-stranded RNA. Involved in the processing of primary rRNA transcript to yield the immediate precursors to the large and small rRNAs (23S and 16S). Processes some mRNAs, and tRNAs when they are encoded in the rRNA operon. Processes pre-crRNA and tracrRNA of type II CRISPR loci if present in the organism. This is Ribonuclease 3 from Streptococcus uberis (strain ATCC BAA-854 / 0140J).